A 225-amino-acid polypeptide reads, in one-letter code: Small ribosomal subunit protein uS3 (225 aa).

The KH type-2 domain maps to 38–106; it reads LRGHLRKKLS…DVALNIVEIR (69 aa).

It belongs to the universal ribosomal protein uS3 family. As to quaternary structure, part of the 30S ribosomal subunit. Forms a tight complex with proteins S10 and S14.

In terms of biological role, binds the lower part of the 30S subunit head. Binds mRNA in the 70S ribosome, positioning it for translation. The protein is Small ribosomal subunit protein uS3 of Granulibacter bethesdensis (strain ATCC BAA-1260 / CGDNIH1).